The following is a 161-amino-acid chain: Putative ecotin-like protein (161 aa).

An N-terminal signal peptide occupies residues 1–24; sequence MSLRPIETAIASLTMLMLQGCAHA.

The protein belongs to the protease inhibitor I11 (ecotin) family.

This chain is Putative ecotin-like protein, found in Methylobacillus flagellatus (strain ATCC 51484 / DSM 6875 / VKM B-1610 / KT).